Reading from the N-terminus, the 448-residue chain is Methylenetetrahydrofolate--tRNA-(uracil-5-)-methyltransferase TrmFO (448 aa).

13–18 (GAGLAG) contacts FAD.

The protein belongs to the MnmG family. TrmFO subfamily. FAD is required as a cofactor.

Its subcellular location is the cytoplasm. It catalyses the reaction uridine(54) in tRNA + (6R)-5,10-methylene-5,6,7,8-tetrahydrofolate + NADH + H(+) = 5-methyluridine(54) in tRNA + (6S)-5,6,7,8-tetrahydrofolate + NAD(+). The enzyme catalyses uridine(54) in tRNA + (6R)-5,10-methylene-5,6,7,8-tetrahydrofolate + NADPH + H(+) = 5-methyluridine(54) in tRNA + (6S)-5,6,7,8-tetrahydrofolate + NADP(+). Functionally, catalyzes the folate-dependent formation of 5-methyl-uridine at position 54 (M-5-U54) in all tRNAs. In Streptococcus pyogenes serotype M6 (strain ATCC BAA-946 / MGAS10394), this protein is Methylenetetrahydrofolate--tRNA-(uracil-5-)-methyltransferase TrmFO.